The chain runs to 260 residues: Metallo-beta-lactamase domain-containing protein 1 (260 aa).

His-118, His-120, Asp-122, His-123, His-173, Asp-196, and His-235 together coordinate Zn(2+).

Belongs to the metallo-beta-lactamase superfamily. Glyoxalase II family. As to quaternary structure, homodimer. Zn(2+) is required as a cofactor.

The protein resides in the cytoplasm. It localises to the cytosol. Its subcellular location is the nucleus. It catalyses the reaction a ribonucleotidyl-ribonucleotide-RNA + H2O = a 3'-end ribonucleotide-RNA + a 5'-end 5'-phospho-ribonucleoside-RNA + H(+). Functionally, endoribonuclease that catalyzes the hydrolysis of histone-coding pre-mRNA 3'-end. Involved in histone pre-mRNA processing during the S-phase of the cell cycle, which is required for entering/progressing through S-phase. Cleaves histone pre-mRNA at a major and a minor cleavage site after the 5'-ACCCA-3' and the 5'-ACCCACA-3' sequence, respectively, and located downstream of the stem-loop. May require the presence of the HDE element located at the histone pre-RNA 3'-end to avoid non-specific cleavage. The sequence is that of Metallo-beta-lactamase domain-containing protein 1 from Mus musculus (Mouse).